The primary structure comprises 207 residues: MLNKLSRLLADAGISLTDHQKTLLVAYVDMLHKWNKAYNLTSVRDPNEMLVRHILDSIVVAPYLQGQRFIDVGTGPGLPGIPLAIVLPDAHFTLLDSLGKRVRFLRQVQHELKLENITPVQSRVEAYPSEPPFDGVISRAFASLNDMVSWCHHLPGEKGRFYALKGQLPGDEIASLPDNFSVESVEKLRVPQLEGERHLVIIKSNKV.

S-adenosyl-L-methionine-binding positions include glycine 73, leucine 78, 124–125 (VE), and arginine 139.

This sequence belongs to the methyltransferase superfamily. RNA methyltransferase RsmG family.

The protein localises to the cytoplasm. The catalysed reaction is guanosine(527) in 16S rRNA + S-adenosyl-L-methionine = N(7)-methylguanosine(527) in 16S rRNA + S-adenosyl-L-homocysteine. In terms of biological role, specifically methylates the N7 position of guanine in position 527 of 16S rRNA. The sequence is that of Ribosomal RNA small subunit methyltransferase G from Salmonella choleraesuis (strain SC-B67).